Consider the following 119-residue polypeptide: NADH-quinone oxidoreductase subunit A (119 aa).

The next 3 membrane-spanning stretches (helical) occupy residues 7–27 (FPVL…MFLG), 63–83 (LIAI…PWGV), and 88–108 (IGWF…VGFV).

Belongs to the complex I subunit 3 family. In terms of assembly, NDH-1 is composed of 14 different subunits. Subunits NuoA, H, J, K, L, M, N constitute the membrane sector of the complex.

The protein resides in the cell membrane. It catalyses the reaction a quinone + NADH + 5 H(+)(in) = a quinol + NAD(+) + 4 H(+)(out). In terms of biological role, NDH-1 shuttles electrons from NADH, via FMN and iron-sulfur (Fe-S) centers, to quinones in the respiratory chain. The immediate electron acceptor for the enzyme in this species is believed to be ubiquinone. Couples the redox reaction to proton translocation (for every two electrons transferred, four hydrogen ions are translocated across the cytoplasmic membrane), and thus conserves the redox energy in a proton gradient. The chain is NADH-quinone oxidoreductase subunit A from Polynucleobacter asymbioticus (strain DSM 18221 / CIP 109841 / QLW-P1DMWA-1) (Polynucleobacter necessarius subsp. asymbioticus).